The chain runs to 408 residues: Phosphoenolpyruvate/phosphate translocator 1, chloroplastic (408 aa).

The transit peptide at 1–66 (MQSAAAVGLL…ISARRIGLVP (66 aa)) directs the protein to the chloroplast. Helical transmembrane passes span 105 to 125 (TLQL…FNIY), 139 to 159 (ITNV…ITGI), 165 to 185 (ISGA…MGNL), 222 to 242 (PTPF…LASL), 245 to 262 (ASFN…NVTF), 283 to 303 (ITLF…VTLL), and 375 to 395 (TPVS…VFLY). The EamA domain occupies 124–241 (IYNKQVLKVF…PIVGGVALAS (118 aa)).

This sequence belongs to the TPT transporter family. PPT (TC 2.A.7.9) subfamily.

The protein localises to the plastid. It localises to the chloroplast membrane. Functionally, phosphoenolpyruvate/phosphate translocator that transports phosphoenolpyruvate (PEP) and dihydroxyacetone phosphate. This is Phosphoenolpyruvate/phosphate translocator 1, chloroplastic (PPT1) from Oryza sativa subsp. japonica (Rice).